The sequence spans 335 residues: ETS translocation variant 2 (335 aa).

Disordered regions lie at residues 94-138 (DPWS…SWSH) and 201-220 (GHQS…SDRA). The segment covering 205–220 (PAFTTPSKSNKQSDRA) has biased composition (polar residues). Positions 234-314 (IQLWQFLLEL…GGRKYTYRFG (81 aa)) form a DNA-binding region, ETS.

This sequence belongs to the ETS family. Testis.

It localises to the nucleus. Binds to DNA sequences containing the consensus pentanucleotide 5'-CGGA[AT]-3'. This is ETS translocation variant 2 (Etv2) from Mus musculus (Mouse).